A 173-amino-acid chain; its full sequence is NADH-ubiquinone oxidoreductase chain 6 (173 aa).

Helical transmembrane passes span 1–21 (MAYI…SVAS), 25–45 (PYFA…VLMG), 53–73 (LVLF…CAAL), 87–107 (VLGS…WFWG), and 139–159 (LGGG…LVVL).

The protein belongs to the complex I subunit 6 family.

The protein resides in the mitochondrion membrane. It catalyses the reaction a ubiquinone + NADH + 5 H(+)(in) = a ubiquinol + NAD(+) + 4 H(+)(out). Functionally, core subunit of the mitochondrial membrane respiratory chain NADH dehydrogenase (Complex I) that is believed to belong to the minimal assembly required for catalysis. Complex I functions in the transfer of electrons from NADH to the respiratory chain. The immediate electron acceptor for the enzyme is believed to be ubiquinone. The chain is NADH-ubiquinone oxidoreductase chain 6 (MT-ND6) from Gadus morhua (Atlantic cod).